The following is a 152-amino-acid chain: Transcriptional regulator MraZ (152 aa).

SpoVT-AbrB domains follow at residues 5–52 (TSAI…PLPE) and 81–124 (ASDC…HDTA).

This sequence belongs to the MraZ family. In terms of assembly, forms oligomers.

The protein localises to the cytoplasm. The protein resides in the nucleoid. This Colwellia psychrerythraea (strain 34H / ATCC BAA-681) (Vibrio psychroerythus) protein is Transcriptional regulator MraZ.